Consider the following 478-residue polypeptide: ATP synthase subunit beta (478 aa).

Residue 164 to 171 coordinates ATP; the sequence is GGAGVGKT.

Belongs to the ATPase alpha/beta chains family. In terms of assembly, F-type ATPases have 2 components, CF(1) - the catalytic core - and CF(0) - the membrane proton channel. CF(1) has five subunits: alpha(3), beta(3), gamma(1), delta(1), epsilon(1). CF(0) has three main subunits: a(1), b(2) and c(9-12). The alpha and beta chains form an alternating ring which encloses part of the gamma chain. CF(1) is attached to CF(0) by a central stalk formed by the gamma and epsilon chains, while a peripheral stalk is formed by the delta and b chains.

Its subcellular location is the cell membrane. The enzyme catalyses ATP + H2O + 4 H(+)(in) = ADP + phosphate + 5 H(+)(out). Its function is as follows. Produces ATP from ADP in the presence of a proton gradient across the membrane. The catalytic sites are hosted primarily by the beta subunits. The sequence is that of ATP synthase subunit beta from Streptomyces coelicolor (strain ATCC BAA-471 / A3(2) / M145).